Here is a 511-residue protein sequence, read N- to C-terminus: Probable endopeptidase p60 (511 aa).

An N-terminal signal peptide occupies residues 1 to 27 (MNMKKATIVSAAGIAVTAFAAPSVVSA). The LysM 1 domain occupies 28–71 (NTVVVASGDTLWGIASKTGTTVDQLKQLNKLDSDRIVPGQKLTI). The region spanning 78–142 (KVEKSVSATW…VNGKYLSDAK (65 aa)) is the SH3b domain. Positions 175–218 (STYKVKSGDTIWALSVKYGVPVQKLIEWNNLSSSSIYVGQTIAV) constitute a LysM 2 domain. Composition is skewed to low complexity over residues 229–257 (TVKQ…QAKP) and 264–282 (KPAV…AKPA). The tract at residues 229–291 (TVKQAAPAKV…AVEQKASTPA (63 aa)) is disordered. A LysM 3 domain is found at 297-341 (ATYKVQNGDSLGKIASLFKVSVADLTNWNNLNATITIYAGQELSV). 2 stretches are compositionally biased toward low complexity: residues 347–362 (KPKP…SKPA) and 372–390 (TNTT…NTSQ). Residues 347-390 (KPKPAAPAKPAVSKPATSTPAKVTPTNTTNNSTPTTNVNNNTSQ) form a disordered region. One can recognise a NlpC/P60 domain in the interval 393–511 (SASFSALYAE…GQYLVGFGRV (119 aa)). Cys423 serves as the catalytic Nucleophile. His473 acts as the Proton acceptor in catalysis. Asp485 is an active-site residue.

This sequence belongs to the peptidase C40 family.

This major extracellular protein may be involved in the invasion of non-professional phagocytic cells by Listeria. The sequence is that of Probable endopeptidase p60 (iap) from Listeria grayi (Listeria murrayi).